We begin with the raw amino-acid sequence, 463 residues long: Type IV secretion system protein PtlD (463 aa).

The first 24 residues, 1–24 (MAGLSRILLSCTLACLLAGQAAQA), serve as a signal peptide directing secretion. 5 helical membrane-spanning segments follow: residues 118-138 (LQPL…YALL), 232-252 (WLLC…LAAS), 253-273 (LLIV…LFLV), 294-314 (ALVF…VLAG), and 333-353 (MLAA…VPLA). The segment covering 376-410 (AHRQAAARQYAPRPAAAAAAAGPHQAGTYAASATP) has biased composition (low complexity). The interval 376–463 (AHRQAAARQY…RVLPRKPNLP (88 aa)) is disordered. The segment covering 411 to 420 (APAPARPAPS) has biased composition (pro residues). Positions 441 to 455 (VRRDDRPAPAPDRRV) are enriched in basic and acidic residues.

It is found in the cell membrane. In terms of biological role, component of the type IV secretion system ptl required for secretion of assembled pertussis toxin (PTX) through the outer membrane. The protein is Type IV secretion system protein PtlD (ptlD) of Bordetella pertussis (strain Tohama I / ATCC BAA-589 / NCTC 13251).